Here is a 187-residue protein sequence, read N- to C-terminus: UPF0301 protein ESA_00394 (187 aa).

This sequence belongs to the UPF0301 (AlgH) family.

In Cronobacter sakazakii (strain ATCC BAA-894) (Enterobacter sakazakii), this protein is UPF0301 protein ESA_00394.